Here is a 470-residue protein sequence, read N- to C-terminus: Ribulose bisphosphate carboxylase large chain (470 aa).

Positions 115 and 165 each coordinate substrate. K167 serves as the catalytic Proton acceptor. K169 is a binding site for substrate. Mg(2+) is bound by residues K193, D195, and E196. Residue K193 is modified to N6-carboxylysine. H286 functions as the Proton acceptor in the catalytic mechanism. Residues R287, H319, and S371 each contribute to the substrate site.

The protein belongs to the RuBisCO large chain family. Type I subfamily. Heterohexadecamer of 8 large chains and 8 small chains. Forms a CsoS2-CsoS1-RuBisCO complex. It depends on Mg(2+) as a cofactor.

It is found in the carboxysome. It carries out the reaction 2 (2R)-3-phosphoglycerate + 2 H(+) = D-ribulose 1,5-bisphosphate + CO2 + H2O. The catalysed reaction is D-ribulose 1,5-bisphosphate + O2 = 2-phosphoglycolate + (2R)-3-phosphoglycerate + 2 H(+). In terms of biological role, ruBisCO catalyzes two reactions: the carboxylation of D-ribulose 1,5-bisphosphate, the primary event in carbon dioxide fixation, as well as the oxidative fragmentation of the pentose substrate in the photorespiration process. Both reactions occur simultaneously and in competition at the same active site. The sequence is that of Ribulose bisphosphate carboxylase large chain from Prochlorococcus marinus (strain MIT 9313).